The sequence spans 140 residues: Austinoid biosynthesis clusters protein S (140 aa).

This sequence belongs to the trt14 isomerase family. In terms of assembly, homodimer.

Its pathway is secondary metabolite biosynthesis; terpenoid biosynthesis. Functionally, part of the gene cluster B that mediates the biosynthesis of austinol and dehydroaustinol, two fungal meroterpenoids. The first step of the pathway is the synthesis of 3,5-dimethylorsellinic acid by the polyketide synthase ausA. 3,5-dimethylorsellinic acid is then prenylated by the polyprenyl transferase ausN. Further epoxidation by the FAD-dependent monooxygenase ausM and cyclization by the probable terpene cyclase ausL lead to the formation of protoaustinoid A. Protoaustinoid A is then oxidized to spiro-lactone preaustinoid A3 by the combined action of the FAD-binding monooxygenases ausB and ausC, and the dioxygenase ausE. Acid-catalyzed keto-rearrangement and ring contraction of the tetraketide portion of preaustinoid A3 by ausJ lead to the formation of preaustinoid A4. The aldo-keto reductase ausK, with the help of ausH, is involved in the next step by transforming preaustinoid A4 into isoaustinone which is in turn hydroxylated by the P450 monooxygenase ausI to form austinolide. Finally, the cytochrome P450 monooxygenase ausG modifies austinolide to austinol. Austinol can be further modified to dehydroaustinol which forms a diffusible complex with diorcinol that initiates conidiation. Due to genetic rearrangements of the clusters and the subsequent loss of some enzymes, the end products of the Emericella nidulans austinoid biosynthesis clusters are austinol and dehydroaustinol, even if additional enzymes, such as the O-acetyltransferase ausQ and the cytochrome P450 monooxygenase ausR are still functional. AusS is necessary for austinoids production and may play a possible function as a regulator. In Emericella nidulans (strain FGSC A4 / ATCC 38163 / CBS 112.46 / NRRL 194 / M139) (Aspergillus nidulans), this protein is Austinoid biosynthesis clusters protein S.